A 436-amino-acid chain; its full sequence is Protein translocase subunit SecY (436 aa).

The next 10 membrane-spanning stretches (helical) occupy residues 19 to 39 (ILFT…TVPG), 68 to 88 (FSVF…VQLL), 116 to 136 (YISL…FNAL), 151 to 171 (LFIG…GEQI), 179 to 199 (GVSM…VKGI), 216 to 236 (IIFV…TTYV), 269 to 289 (VIPV…LQFL), 313 to 333 (GIAM…FVQI), 372 to 392 (VGSL…DLFG), and 395 to 415 (DTVA…IEGM).

The protein belongs to the SecY/SEC61-alpha family. In terms of assembly, component of the Sec protein translocase complex. Heterotrimer consisting of SecY, SecE and SecG subunits. The heterotrimers can form oligomers, although 1 heterotrimer is thought to be able to translocate proteins. Interacts with the ribosome. Interacts with SecDF, and other proteins may be involved. Interacts with SecA.

It is found in the cell membrane. Its function is as follows. The central subunit of the protein translocation channel SecYEG. Consists of two halves formed by TMs 1-5 and 6-10. These two domains form a lateral gate at the front which open onto the bilayer between TMs 2 and 7, and are clamped together by SecE at the back. The channel is closed by both a pore ring composed of hydrophobic SecY resides and a short helix (helix 2A) on the extracellular side of the membrane which forms a plug. The plug probably moves laterally to allow the channel to open. The ring and the pore may move independently. In Streptococcus gordonii (strain Challis / ATCC 35105 / BCRC 15272 / CH1 / DL1 / V288), this protein is Protein translocase subunit SecY.